A 251-amino-acid chain; its full sequence is Flap endonuclease Xni (251 aa).

Asp104 contacts Mg(2+). Residues 160–249 (VLPRQLPDYW…IDGNLQQLRL (90 aa)) enclose the 5'-3' exonuclease domain. Positions 171, 172, 180, 182, and 185 each coordinate K(+). Residues 184-189 (GIGPKS) are interaction with DNA.

It belongs to the Xni family. Mg(2+) serves as cofactor. It depends on K(+) as a cofactor.

Functionally, has flap endonuclease activity. During DNA replication, flap endonucleases cleave the 5'-overhanging flap structure that is generated by displacement synthesis when DNA polymerase encounters the 5'-end of a downstream Okazaki fragment. The polypeptide is Flap endonuclease Xni (Salmonella schwarzengrund (strain CVM19633)).